We begin with the raw amino-acid sequence, 148 residues long: Large ribosomal subunit protein bL9 (148 aa).

The protein belongs to the bacterial ribosomal protein bL9 family.

Its function is as follows. Binds to the 23S rRNA. The polypeptide is Large ribosomal subunit protein bL9 (Stutzerimonas stutzeri (strain A1501) (Pseudomonas stutzeri)).